The chain runs to 466 residues: DNA repair protein RadA (466 aa).

The segment at cysteine 12–cysteine 29 adopts a C4-type zinc-finger fold. Glycine 100–serine 107 contributes to the ATP binding site. The RadA KNRFG motif motif lies at lysine 261 to glycine 265. The tract at residues aspartate 359 to glutamine 466 is lon-protease-like.

It belongs to the RecA family. RadA subfamily. In terms of assembly, interacts with DisA.

Functionally, DNA-dependent ATPase involved in processing of recombination intermediates, plays a role in repairing DNA breaks. Stimulates the branch migration of RecA-mediated strand transfer reactions, allowing the 3' invading strand to extend heteroduplex DNA faster. Binds ssDNA in the presence of ADP but not other nucleotides, has ATPase activity that is stimulated by ssDNA and various branched DNA structures, but inhibited by SSB. Does not have RecA's homology-searching function. Also inhibits the diadenylate cyclase activity of DisA. The protein is DNA repair protein RadA of Mycolicibacterium smegmatis (strain ATCC 700084 / mc(2)155) (Mycobacterium smegmatis).